Here is a 243-residue protein sequence, read N- to C-terminus: UPF0758 protein SYNPCC7002_A0220 (243 aa).

An MPN domain is found at Ile-112–Leu-235. Zn(2+) is bound by residues His-184, His-186, and Asp-197. The JAMM motif signature appears at His-184–Asp-197.

Belongs to the UPF0758 family.

In Picosynechococcus sp. (strain ATCC 27264 / PCC 7002 / PR-6) (Agmenellum quadruplicatum), this protein is UPF0758 protein SYNPCC7002_A0220.